The chain runs to 519 residues: Ribonuclease Y (519 aa).

Residues 6–26 traverse the membrane as a helical segment; it reads VPFYLLIFLVGIGLGVLTFWA. The KH domain occupies 209–272; it reads TVCTVTIPNE…HIAKMALTEL (64 aa). Positions 335–428 constitute an HD domain; the sequence is VLDHSLEVSH…CSAADAISAS (94 aa).

The protein belongs to the RNase Y family.

The protein localises to the cell membrane. Functionally, endoribonuclease that initiates mRNA decay. This is Ribonuclease Y from Protochlamydia amoebophila (strain UWE25).